A 163-amino-acid polypeptide reads, in one-letter code: Nucleotide-binding protein KPK_4305 (163 aa).

The protein belongs to the YajQ family.

Its function is as follows. Nucleotide-binding protein. This chain is Nucleotide-binding protein KPK_4305, found in Klebsiella pneumoniae (strain 342).